Consider the following 663-residue polypeptide: UvrABC system protein B (663 aa).

Positions 30–417 (EGIKAGKRHQ…TDKMVEQIIR (388 aa)) constitute a Helicase ATP-binding domain. 43–50 (GATGTGKT) contacts ATP. Residues 96–119 (YYDYYQPEAYVPSTDTFIEKDASI) carry the Beta-hairpin motif. Residues 434–600 (QIDDLLSEIQ…TINKKIHDLI (167 aa)) form the Helicase C-terminal domain. The region spanning 627–662 (QKTIDNIEKEMKQAAKDLDFEKATELRDMLFELKAE) is the UVR domain.

This sequence belongs to the UvrB family. As to quaternary structure, forms a heterotetramer with UvrA during the search for lesions. Interacts with UvrC in an incision complex.

It is found in the cytoplasm. The UvrABC repair system catalyzes the recognition and processing of DNA lesions. A damage recognition complex composed of 2 UvrA and 2 UvrB subunits scans DNA for abnormalities. Upon binding of the UvrA(2)B(2) complex to a putative damaged site, the DNA wraps around one UvrB monomer. DNA wrap is dependent on ATP binding by UvrB and probably causes local melting of the DNA helix, facilitating insertion of UvrB beta-hairpin between the DNA strands. Then UvrB probes one DNA strand for the presence of a lesion. If a lesion is found the UvrA subunits dissociate and the UvrB-DNA preincision complex is formed. This complex is subsequently bound by UvrC and the second UvrB is released. If no lesion is found, the DNA wraps around the other UvrB subunit that will check the other stand for damage. This chain is UvrABC system protein B, found in Staphylococcus aureus (strain COL).